The sequence spans 684 residues: Threonine--tRNA ligase (684 aa).

Residues 1–66 (MSTAASPAPA…DADVEVVPVP (66 aa)) enclose the TGS domain. The interval 261–567 (DHRKLGVELD…LTEHYAGAFP (307 aa)) is catalytic. C366, H417, and H544 together coordinate Zn(2+).

This sequence belongs to the class-II aminoacyl-tRNA synthetase family. As to quaternary structure, homodimer. The cofactor is Zn(2+).

The protein localises to the cytoplasm. The catalysed reaction is tRNA(Thr) + L-threonine + ATP = L-threonyl-tRNA(Thr) + AMP + diphosphate + H(+). In terms of biological role, catalyzes the attachment of threonine to tRNA(Thr) in a two-step reaction: L-threonine is first activated by ATP to form Thr-AMP and then transferred to the acceptor end of tRNA(Thr). Also edits incorrectly charged L-seryl-tRNA(Thr). The polypeptide is Threonine--tRNA ligase (Mycobacterium sp. (strain KMS)).